Reading from the N-terminus, the 470-residue chain is Synaptotagmin-17 (470 aa).

The disordered stretch occupies residues Pro-54–Arg-112. Low complexity predominate over residues Ser-92–Arg-112. Phosphoserine is present on residues Ser-114 and Ser-115. 2 consecutive C2 domains span residues Gln-180–Lys-306 and Glu-317–His-451.

This sequence belongs to the synaptotagmin family.

Its subcellular location is the membrane. Functionally, plays a role in dendrite formation by melanocytes. This is Synaptotagmin-17 (Syt17) from Mus musculus (Mouse).